We begin with the raw amino-acid sequence, 389 residues long: BTB/POZ domain-containing protein KCTD9 (389 aa).

Residues 3 to 82 enclose the KHA domain; it reads RVTLFLNGSP…PQTDSKPPEG (80 aa). Position 11 is a phosphoserine (Ser-11). The BTB domain maps to 89–161; the sequence is DWLTLNVGGR…LRHGQLIVND (73 aa). 3 consecutive Pentapeptide repeat domains span residues 224–256, 258–297, and 338–376; these read NFSGADLSRLDLRYINFKMANLSRCNLAHANLC, ANLERADLSGSVLDCANLQGVKMLCSNAEGASLKLCNFED, and CNLRGATLAGTDLENCDLSGCDLQEANLRGSNVKGAIFE.

In terms of assembly, forms pentamers. Component of a complex composed of 5 subunits of KCTD9 and 5 CUL3.

It participates in protein modification; protein ubiquitination. In terms of biological role, substrate-specific adapter of a BCR (BTB-CUL3-RBX1) E3 ubiquitin-protein ligase complex, which mediates the ubiquitination of target proteins, leading to their degradation by the proteasome. In Homo sapiens (Human), this protein is BTB/POZ domain-containing protein KCTD9 (KCTD9).